The chain runs to 105 residues: Urease subunit beta (105 aa).

It belongs to the urease beta subunit family. In terms of assembly, heterotrimer of UreA (gamma), UreB (beta) and UreC (alpha) subunits. Three heterotrimers associate to form the active enzyme.

Its subcellular location is the cytoplasm. It catalyses the reaction urea + 2 H2O + H(+) = hydrogencarbonate + 2 NH4(+). The protein operates within nitrogen metabolism; urea degradation; CO(2) and NH(3) from urea (urease route): step 1/1. The protein is Urease subunit beta of Pseudomonas entomophila (strain L48).